A 201-amino-acid polypeptide reads, in one-letter code: Superoxide dismutase [Mn] (201 aa).

Mn(2+)-binding residues include histidine 27, histidine 81, aspartate 163, and histidine 167.

It belongs to the iron/manganese superoxide dismutase family. Homodimer. Mn(2+) is required as a cofactor.

It is found in the secreted. The catalysed reaction is 2 superoxide + 2 H(+) = H2O2 + O2. Destroys superoxide anion radicals which are normally produced within the cells and which are toxic to biological systems. The protein is Superoxide dismutase [Mn] (sodA) of Streptococcus pyogenes serotype M3 (strain ATCC BAA-595 / MGAS315).